The primary structure comprises 100 residues: Omega-hexatoxin-Asp2a (100 aa).

An N-terminal signal peptide occupies residues 1–23 (MKFSKLSITLAVILTQAVFVLCG). Residues 24-55 (MKNEDFMEKGLESNELHDAIKKPVNSGKPDTE) constitute a propeptide that is removed on maturation. Cystine bridges form between cysteine 60–cysteine 73, cysteine 66–cysteine 79, and cysteine 72–cysteine 84.

This sequence belongs to the neurotoxin 15 family. 02 (omega-actx) subfamily. In terms of tissue distribution, expressed by the venom gland.

The protein resides in the secreted. Its function is as follows. Potent inhibitor of insect, but not mammalian, voltage-gated calcium channels (Cav). This chain is Omega-hexatoxin-Asp2a, found in Atrax sp. (strain Illawarra) (Funnel-web spider).